We begin with the raw amino-acid sequence, 215 residues long: 3-dehydroquinate dehydratase (215 aa).

3-dehydroquinate contacts are provided by residues 27 to 29 and Arg54; that span reads EVR. His112 serves as the catalytic Proton donor/acceptor. The active-site Schiff-base intermediate with substrate is the Lys139. Residues Arg176 and Gln198 each coordinate 3-dehydroquinate.

The protein belongs to the type-I 3-dehydroquinase family. As to quaternary structure, homodimer.

It carries out the reaction 3-dehydroquinate = 3-dehydroshikimate + H2O. It functions in the pathway metabolic intermediate biosynthesis; chorismate biosynthesis; chorismate from D-erythrose 4-phosphate and phosphoenolpyruvate: step 3/7. Its function is as follows. Involved in the third step of the chorismate pathway, which leads to the biosynthesis of aromatic amino acids. Catalyzes the cis-dehydration of 3-dehydroquinate (DHQ) and introduces the first double bond of the aromatic ring to yield 3-dehydroshikimate. This is 3-dehydroquinate dehydratase from Thermococcus onnurineus (strain NA1).